A 146-amino-acid chain; its full sequence is Decarboxylase dmxR15 (146 aa).

An EthD domain is found at 31-126 (PGMSEGDYRN…MHDHEVFADT (96 aa)).

This sequence belongs to the tpcK family.

The catalysed reaction is atrochrysone carboxylate + H(+) = atrochrysone + CO2. The protein operates within secondary metabolite biosynthesis. In terms of biological role, decarboxylase; part of the gene cluster that mediates the biosynthesis of the dimeric xanthones cryptosporioptides. The pathway begins with the synthesis of atrochrysone thioester by the polyketide synthase dmx-nrPKS. The atrochrysone carboxyl ACP thioesterase dmxR1 then breaks the thioester bond and releases the atrochrysone carboxylic acid from dmx-nrPKS. Atrochrysone carboxylic acid is decarboxylated by the decarboxylase dmxR15, and oxidized by the anthrone oxygenase dmxR16 to yield emodin. Emodin is then reduced to emodin hydroquinone by the oxidoreductase dmxR7. A-ring reduction by the short chain dehydrogenase dmxR18, dehydration by the scytalone dehydratase-like protein dmxR17 and probable spontaneous re-oxidation, results in overall deoxygenation to chrysophanol. Baeyer-Villiger oxidation by the Baeyer-Villiger monooxygenase (BVMO) dmxR6 then yields monodictylactone in equilibrium with monodictyphenone. In the case of the cryptosporioptides biosynthesis, monodictylactone is reduced at C-12 to an alcohol (by the short chain dehydrogenases dmxR12 or dmxR8) and hydroxylated at C-5 by dmxR9, yielding the electron-rich aromatic which could eliminate H(2)O to form the ortho-quinonemethide, followed by tautomerisation to paraquinone and complete the formal reduction to produce the 10-methylgroup. Conjugate addition of C-4a-OH to the resulting paraquinone by the monooxygenase dmxR10 then gives cyclohexadienone, which is then reduced at C-5 by the short chain dehydrogenase dmxR3 to give the dihydroxanthone. The 6,7-epoxide in the cryptosporioptides could be introduced by the cytochrome P450 monooxygenase dmxL3. The highly reducing PKS dmxL2 manufactures butyrate, which is further carboxylated by dmxL1 to form ethylmalonate. It is not yet clear whether the carboxylation occurs while the butyrate is attached to the ACP of dmxL2, but this unusual fungal metabolite could then be esterified to O-5 by the O-acetyltransferase dmxR13. Finally, dimerization performed by dmxR5 gives the observed dimers cryptosporioptides A, B and C as the final products of the pathway. The chain is Decarboxylase dmxR15 from Cryptosporiopsis sp. (strain 8999).